We begin with the raw amino-acid sequence, 138 residues long: MDNVFEFPAGLYGFPDLKRFVVVDVPGAGDVVKQLVSTEDPNVGFTLVFPFAFFPRYSPDIPEEELVAVGAESAEQVLLYAIASVPEDFRKATANLRAPVLFNPFTRKGRQVILGDDRYGIREPLFQGADRIPAEEGR.

Belongs to the FliW family. In terms of assembly, interacts with translational regulator CsrA and flagellin(s).

The protein localises to the cytoplasm. In terms of biological role, acts as an anti-CsrA protein, binds CsrA and prevents it from repressing translation of its target genes, one of which is flagellin. Binds to flagellin and participates in the assembly of the flagellum. This Symbiobacterium thermophilum (strain DSM 24528 / JCM 14929 / IAM 14863 / T) protein is Flagellar assembly factor FliW.